The following is a 478-amino-acid chain: Dihydrolipoyl dehydrogenase (478 aa).

Residues 34–49 (EKYIGKEGKVALGGTC), K58, and G122 each bind FAD. A disulfide bond links C49 and C54. NAD(+) is bound by residues 188-192 (GAGVI), E211, V245, and 276-279 (AVGR). 2 residues coordinate FAD: D319 and A327. H451 (proton acceptor) is an active-site residue.

This sequence belongs to the class-I pyridine nucleotide-disulfide oxidoreductase family. Homodimer. FAD is required as a cofactor.

It is found in the cytoplasm. It catalyses the reaction N(6)-[(R)-dihydrolipoyl]-L-lysyl-[protein] + NAD(+) = N(6)-[(R)-lipoyl]-L-lysyl-[protein] + NADH + H(+). Its function is as follows. The branched-chain alpha-keto dehydrogenase complex catalyzes the overall conversion of alpha-keto acids to acyl-CoA and CO(2). It contains multiple copies of 3 enzymatic components: branched-chain alpha-keto acid decarboxylase (E1), lipoamide acyltransferase (E2) and lipoamide dehydrogenase (E3). The sequence is that of Dihydrolipoyl dehydrogenase (lpd) from Pseudomonas fluorescens.